Reading from the N-terminus, the 195-residue chain is Protein Fer3 (195 aa).

2 disordered regions span residues 1–24 (MQHP…LWGQ) and 56–82 (PLVP…RRRV). Low complexity predominate over residues 63–75 (STNGRANGSSSSS). In terms of domain architecture, bHLH spans 86–138 (AQRRAANIRERRRMFNLNEAFDKLRRKVPTFAYEKRLSRIETLRLAITYIGFM). Residues 145–175 (TPSNSHKSRSDVYGSMNGHHQAPPPAIHPHH) form a disordered region.

Its subcellular location is the nucleus. In terms of biological role, transcription factor that binds to the E-box and functions as inhibitor of transcription. DNA binding requires dimerization with an E protein. Inhibits transcription activation by ASCL1/MASH1 by sequestering E proteins. The sequence is that of Protein Fer3 (fer3) from Drosophila melanogaster (Fruit fly).